Consider the following 274-residue polypeptide: Malonyl-[acyl-carrier protein] O-methyltransferase (274 aa).

It belongs to the methyltransferase superfamily.

It carries out the reaction malonyl-[ACP] + S-adenosyl-L-methionine = malonyl-[ACP] methyl ester + S-adenosyl-L-homocysteine. The protein operates within cofactor biosynthesis; biotin biosynthesis. Its function is as follows. Converts the free carboxyl group of a malonyl-thioester to its methyl ester by transfer of a methyl group from S-adenosyl-L-methionine (SAM). It allows to synthesize pimeloyl-ACP via the fatty acid synthetic pathway. The protein is Malonyl-[acyl-carrier protein] O-methyltransferase of Bacteroides helcogenes (strain ATCC 35417 / DSM 20613 / JCM 6297 / CCUG 15421 / P 36-108).